We begin with the raw amino-acid sequence, 121 residues long: Protein p14.5 (121 aa).

A2 is modified (N-acetylalanine; by host). The interval S84 to K121 is disordered. The span at K104 to K121 shows a compositional bias: basic residues.

Belongs to the asfivirus structural protein p14.5 family. Interacts with the major capsid protein. Interacts with host IRF3; this interaction interferes with the recruitment of IRF3 to TBK1. Acetylated.

The protein resides in the virion. Its function is as follows. Structural protein required for transport of intracellular particles from the assembly sites to the plasma membrane. Binds to both ssDNA and dsDNA. Suppressed the activation of the cGAS/STING pathway by interfering with the recruitment of IRF3 to TBK1, which in turn suppresses IRF3 phosphorylation, decreasing interferon production. This chain is Protein p14.5, found in African swine fever virus (isolate Pig/Kenya/KEN-50/1950) (ASFV).